Consider the following 266-residue polypeptide: Type III pantothenate kinase (266 aa).

ATP is bound at residue Asp-9–Lys-16. Residues Tyr-96 and Gly-103 to Arg-106 contribute to the substrate site. The active-site Proton acceptor is the Asp-105. Thr-129 provides a ligand contact to ATP. Thr-189 contributes to the substrate binding site.

This sequence belongs to the type III pantothenate kinase family. In terms of assembly, homodimer. NH4(+) serves as cofactor. It depends on K(+) as a cofactor.

Its subcellular location is the cytoplasm. It carries out the reaction (R)-pantothenate + ATP = (R)-4'-phosphopantothenate + ADP + H(+). It participates in cofactor biosynthesis; coenzyme A biosynthesis; CoA from (R)-pantothenate: step 1/5. Catalyzes the phosphorylation of pantothenate (Pan), the first step in CoA biosynthesis. The chain is Type III pantothenate kinase from Burkholderia lata (strain ATCC 17760 / DSM 23089 / LMG 22485 / NCIMB 9086 / R18194 / 383).